A 945-amino-acid polypeptide reads, in one-letter code: Isoleucine--tRNA ligase (945 aa).

The 'HIGH' region signature appears at 66 to 76 (PYANGDIHLGH). E581 contributes to the L-isoleucyl-5'-AMP binding site. The 'KMSKS' region motif lies at 622-626 (KMSKS). ATP is bound at residue K625. C908, C911, C928, and C931 together coordinate Zn(2+).

It belongs to the class-I aminoacyl-tRNA synthetase family. IleS type 1 subfamily. As to quaternary structure, monomer. It depends on Zn(2+) as a cofactor.

The protein localises to the cytoplasm. The catalysed reaction is tRNA(Ile) + L-isoleucine + ATP = L-isoleucyl-tRNA(Ile) + AMP + diphosphate. Catalyzes the attachment of isoleucine to tRNA(Ile). As IleRS can inadvertently accommodate and process structurally similar amino acids such as valine, to avoid such errors it has two additional distinct tRNA(Ile)-dependent editing activities. One activity is designated as 'pretransfer' editing and involves the hydrolysis of activated Val-AMP. The other activity is designated 'posttransfer' editing and involves deacylation of mischarged Val-tRNA(Ile). This is Isoleucine--tRNA ligase from Paraburkholderia xenovorans (strain LB400).